Here is an 80-residue protein sequence, read N- to C-terminus: Large ribosomal subunit protein bL31 (80 aa).

Residues Cys16, Cys18, Cys38, and Cys41 each coordinate Zn(2+).

The protein belongs to the bacterial ribosomal protein bL31 family. Type A subfamily. In terms of assembly, part of the 50S ribosomal subunit. Zn(2+) serves as cofactor.

Its function is as follows. Binds the 23S rRNA. The polypeptide is Large ribosomal subunit protein bL31 (Mycobacterium avium (strain 104)).